Reading from the N-terminus, the 335-residue chain is Eukaryotic translation initiation factor 3 subunit H-A (335 aa).

Positions 22–156 (IQVDGLVVLK…LKAYRLTPKL (135 aa)) constitute an MPN domain. Over residues 254 to 272 (QQQKQQYQQRRQQENAQRQ) the composition is skewed to low complexity. The tract at residues 254 to 282 (QQQKQQYQQRRQQENAQRQSRGEPPLPEE) is disordered.

It belongs to the eIF-3 subunit H family. Component of the eukaryotic translation initiation factor 3 (eIF-3) complex, which is composed of 13 subunits: eif3a, eif3b, eif3c, eif3d, eif3e, eif3f, eif3g, eif3h, eif3i, eif3j, eif3k, eif3l and eif3m.

It is found in the cytoplasm. In terms of biological role, component of the eukaryotic translation initiation factor 3 (eIF-3) complex, which is involved in protein synthesis of a specialized repertoire of mRNAs and, together with other initiation factors, stimulates binding of mRNA and methionyl-tRNAi to the 40S ribosome. The eIF-3 complex specifically targets and initiates translation of a subset of mRNAs involved in cell proliferation. The sequence is that of Eukaryotic translation initiation factor 3 subunit H-A (eif3ha) from Danio rerio (Zebrafish).